Here is a 184-residue protein sequence, read N- to C-terminus: Ras-related protein Rap-1b (184 aa).

10–17 (GSGGVGKS) lines the GTP pocket. An Effector region motif is present at residues 32-40 (YDPTIEDSY). Residues 57-61 (DTAGT) and 116-119 (NKCD) each bind GTP. At cysteine 181 the chain carries Cysteine methyl ester. A lipid anchor (S-geranylgeranyl cysteine) is attached at cysteine 181. Positions 182-184 (HLL) are cleaved as a propeptide — removed in mature form.

The protein belongs to the small GTPase superfamily. Ras family.

The protein localises to the cell membrane. It localises to the cytoplasm. The protein resides in the cytosol. Its subcellular location is the cell junction. It catalyses the reaction GTP + H2O = GDP + phosphate + H(+). In terms of biological role, probable GTP-binding protein that possesses GTPase activity. May play a role in endothelial cell polarity and endothelial barrier function. The sequence is that of Ras-related protein Rap-1b (rap1b) from Xenopus laevis (African clawed frog).